Here is a 63-residue protein sequence, read N- to C-terminus: MAEDKFEQAKGNIKETVGNATDNKELEKDGKGDKASGKAKEAVENVKEKANDVIDKFKGNKGD.

The disordered stretch occupies residues 1–46 (MAEDKFEQAKGNIKETVGNATDNKELEKDGKGDKASGKAKEAVENV). A compositionally biased stretch (basic and acidic residues) spans 22-46 (DNKELEKDGKGDKASGKAKEAVENV).

This sequence belongs to the UPF0337 (CsbD) family.

The protein is UPF0337 protein SERP0494 of Staphylococcus epidermidis (strain ATCC 35984 / DSM 28319 / BCRC 17069 / CCUG 31568 / BM 3577 / RP62A).